The sequence spans 1141 residues: DNA-directed RNA polymerase subunit beta (1141 aa).

The protein belongs to the RNA polymerase beta chain family. The RNAP catalytic core consists of 2 alpha, 1 beta, 1 beta' and 1 omega subunit. When a sigma factor is associated with the core the holoenzyme is formed, which can initiate transcription.

The enzyme catalyses RNA(n) + a ribonucleoside 5'-triphosphate = RNA(n+1) + diphosphate. DNA-dependent RNA polymerase catalyzes the transcription of DNA into RNA using the four ribonucleoside triphosphates as substrates. The sequence is that of DNA-directed RNA polymerase subunit beta from Parafrankia sp. (strain EAN1pec).